The chain runs to 125 residues: Ribonuclease P protein component (125 aa).

The protein belongs to the RnpA family. As to quaternary structure, consists of a catalytic RNA component (M1 or rnpB) and a protein subunit.

The enzyme catalyses Endonucleolytic cleavage of RNA, removing 5'-extranucleotides from tRNA precursor.. RNaseP catalyzes the removal of the 5'-leader sequence from pre-tRNA to produce the mature 5'-terminus. It can also cleave other RNA substrates such as 4.5S RNA. The protein component plays an auxiliary but essential role in vivo by binding to the 5'-leader sequence and broadening the substrate specificity of the ribozyme. This chain is Ribonuclease P protein component, found in Clostridium beijerinckii (strain ATCC 51743 / NCIMB 8052) (Clostridium acetobutylicum).